A 607-amino-acid polypeptide reads, in one-letter code: UvrABC system protein C (607 aa).

Positions 16–94 (GRPGVYRMFD…IKEWRPPYNI (79 aa)) constitute a GIY-YIG domain. The UVR domain occupies 203–238 (NALSEELSASMEKASMALEFERAAELRDQISMLRRV).

It belongs to the UvrC family. Interacts with UvrB in an incision complex.

The protein resides in the cytoplasm. Its function is as follows. The UvrABC repair system catalyzes the recognition and processing of DNA lesions. UvrC both incises the 5' and 3' sides of the lesion. The N-terminal half is responsible for the 3' incision and the C-terminal half is responsible for the 5' incision. The chain is UvrABC system protein C from Ectopseudomonas mendocina (strain ymp) (Pseudomonas mendocina).